The following is a 371-amino-acid chain: RNA polymerase sigma factor SigA (371 aa).

Residues 137-207 (LAEANLRLVV…TRAIADQART (71 aa)) are sigma-70 factor domain-2. The Interaction with polymerase core subunit RpoC signature appears at 161–164 (DLIQ). The sigma-70 factor domain-3 stretch occupies residues 216–292 (ETINKLVREQ…DEVIENPVDY (77 aa)). A sigma-70 factor domain-4 region spans residues 305 to 358 (VLDTLTDREENVLRLRFGLDDGKMRTLEDVGKVFDVTRERIRQIEAKALRKLRH). Residues 331–350 (LEDVGKVFDVTRERIRQIEA) constitute a DNA-binding region (H-T-H motif).

Belongs to the sigma-70 factor family. RpoD/SigA subfamily. Interacts transiently with the RNA polymerase catalytic core.

Its subcellular location is the cytoplasm. Its function is as follows. Sigma factors are initiation factors that promote the attachment of RNA polymerase to specific initiation sites and are then released. This sigma factor is the primary sigma factor during exponential growth. In Streptococcus mutans serotype c (strain ATCC 700610 / UA159), this protein is RNA polymerase sigma factor SigA.